The chain runs to 262 residues: Acyl-[acyl-carrier-protein]--UDP-N-acetylglucosamine O-acyltransferase (262 aa).

Belongs to the transferase hexapeptide repeat family. LpxA subfamily. As to quaternary structure, homotrimer.

It is found in the cytoplasm. It catalyses the reaction a (3R)-hydroxyacyl-[ACP] + UDP-N-acetyl-alpha-D-glucosamine = a UDP-3-O-[(3R)-3-hydroxyacyl]-N-acetyl-alpha-D-glucosamine + holo-[ACP]. Its pathway is glycolipid biosynthesis; lipid IV(A) biosynthesis; lipid IV(A) from (3R)-3-hydroxytetradecanoyl-[acyl-carrier-protein] and UDP-N-acetyl-alpha-D-glucosamine: step 1/6. Its function is as follows. Involved in the biosynthesis of lipid A, a phosphorylated glycolipid that anchors the lipopolysaccharide to the outer membrane of the cell. The chain is Acyl-[acyl-carrier-protein]--UDP-N-acetylglucosamine O-acyltransferase from Burkholderia orbicola (strain MC0-3).